The primary structure comprises 384 residues: Dual-specificity RNA methyltransferase RlmN (384 aa).

Catalysis depends on Glu-105, which acts as the Proton acceptor. The Radical SAM core domain occupies 111–350 (EVDRATLCVS…TIVRKTRGDD (240 aa)). A disulfide bridge links Cys-118 with Cys-355. Residues Cys-125, Cys-129, and Cys-132 each coordinate [4Fe-4S] cluster. Residues 179-180 (GE), Ser-211, 233-235 (SLH), and Asn-312 each bind S-adenosyl-L-methionine. Residue Cys-355 is the S-methylcysteine intermediate of the active site.

This sequence belongs to the radical SAM superfamily. RlmN family. The cofactor is [4Fe-4S] cluster.

Its subcellular location is the cytoplasm. The enzyme catalyses adenosine(2503) in 23S rRNA + 2 reduced [2Fe-2S]-[ferredoxin] + 2 S-adenosyl-L-methionine = 2-methyladenosine(2503) in 23S rRNA + 5'-deoxyadenosine + L-methionine + 2 oxidized [2Fe-2S]-[ferredoxin] + S-adenosyl-L-homocysteine. The catalysed reaction is adenosine(37) in tRNA + 2 reduced [2Fe-2S]-[ferredoxin] + 2 S-adenosyl-L-methionine = 2-methyladenosine(37) in tRNA + 5'-deoxyadenosine + L-methionine + 2 oxidized [2Fe-2S]-[ferredoxin] + S-adenosyl-L-homocysteine. Its function is as follows. Specifically methylates position 2 of adenine 2503 in 23S rRNA and position 2 of adenine 37 in tRNAs. m2A2503 modification seems to play a crucial role in the proofreading step occurring at the peptidyl transferase center and thus would serve to optimize ribosomal fidelity. This Escherichia coli O9:H4 (strain HS) protein is Dual-specificity RNA methyltransferase RlmN.